The chain runs to 526 residues: Fumitremorgin C synthase (526 aa).

The chain crosses the membrane as a helical span at residues 4-24 (LPLSPAVLFLTITLPILYFWI). Residue Cys443 participates in heme binding.

The protein belongs to the cytochrome P450 family. It depends on heme as a cofactor.

Its subcellular location is the membrane. The enzyme catalyses tryprostatin A + reduced [NADPH--hemoprotein reductase] + O2 = fumitremorgin C + oxidized [NADPH--hemoprotein reductase] + 2 H2O + H(+). It functions in the pathway mycotoxin biosynthesis. In terms of biological role, cytochrome P450 monooxygenase; part of the gene cluster that mediates the biosynthesis of fumitremorgins, indole alkaloids that carry not only intriguing chemical structures, but also interesting biological and pharmacological activities. The biosynthesis of fumitremorgin-type alkaloids begins by condensation of the two amino acids L-tryptophan and L-proline to brevianamide F, catalyzed by the non-ribosomal peptide synthetase ftmPS/ftmA. Brevianamide F is then prenylated by the prenyltransferase ftmPT1/ftmB in the presence of dimethylallyl diphosphate, resulting in the formation of tryprostatin B. The three cytochrome P450 monooxygenases, ftmP450-1/ftmC, ftmP450-2/ftmE and ftmP450-3/FtmG, are responsible for the conversion of tryprostatin B to 6-hydroxytryprostatin B, tryprostatin A to fumitremorgin C and fumitremorgin C to 12,13-dihydroxyfumitremorgin C, respectively. The putative methyltransferase ftmMT/ftmD is expected for the conversion of 6-hydroxytryprostatin B to tryprostatin A. FtmPT2/FtmH catalyzes the prenylation of 12,13-dihydroxyfumitre-morgin C in the presence of dimethylallyl diphosphate, resulting in the formation of fumitremorgin B. Fumitremorgin B is further converted to verruculogen by ftmOx1/ftmF via the insertion of an endoperoxide bond between the two prenyl moieties. Finally, verruculogen is further converted to fumitremorgin A by the verruculogen prenyltransferase ftmPT3. In Neosartorya fischeri (strain ATCC 1020 / DSM 3700 / CBS 544.65 / FGSC A1164 / JCM 1740 / NRRL 181 / WB 181) (Aspergillus fischerianus), this protein is Fumitremorgin C synthase.